A 419-amino-acid polypeptide reads, in one-letter code: D-inositol 3-phosphate glycosyltransferase (419 aa).

H9 provides a ligand contact to 1D-myo-inositol 3-phosphate. UDP-N-acetyl-alpha-D-glucosamine-binding positions include 15–16 (QP) and G23. 1D-myo-inositol 3-phosphate contacts are provided by residues 20–25 (DAGGMN), K78, Y110, T134, and R154. The UDP-N-acetyl-alpha-D-glucosamine site is built by R231, K236, and R295. Mg(2+)-binding residues include Y304, R305, and A307. E317 and E325 together coordinate UDP-N-acetyl-alpha-D-glucosamine. Residue T331 participates in Mg(2+) binding.

Belongs to the glycosyltransferase group 1 family. MshA subfamily. As to quaternary structure, homodimer.

The enzyme catalyses 1D-myo-inositol 3-phosphate + UDP-N-acetyl-alpha-D-glucosamine = 1D-myo-inositol 2-acetamido-2-deoxy-alpha-D-glucopyranoside 3-phosphate + UDP + H(+). Functionally, catalyzes the transfer of a N-acetyl-glucosamine moiety to 1D-myo-inositol 3-phosphate to produce 1D-myo-inositol 2-acetamido-2-deoxy-glucopyranoside 3-phosphate in the mycothiol biosynthesis pathway. In Corynebacterium jeikeium (strain K411), this protein is D-inositol 3-phosphate glycosyltransferase.